Reading from the N-terminus, the 385-residue chain is 5'-AMP-activated protein kinase catalytic subunit alpha-1 (385 aa).

The region spanning 1 to 229 is the Protein kinase domain; the sequence is DGRVKIGHYI…IKDIREHEWF (229 aa). At Thr14 the chain carries Phosphothreonine. Residue 15 to 22 participates in ATP binding; the sequence is LGVGTFGK. The Proton acceptor role is filled by Asp100. A Phosphothreonine; by LKB1 and CaMKK2 modification is found at Thr133. Thr219 and Thr276 each carry phosphothreonine. The tract at residues 252–297 is AIS; that stretch reads EALKQDPLAVAYHLIIDNRDFYLATSPPDSFLDDHHLTRVPFLVAE. The residue at position 277 (Ser277) is a Phosphoserine. Ser281 is modified (phosphoserine; by ULK1). Residue Thr289 is modified to Phosphothreonine; by ULK1. Thr298 carries the post-translational modification Phosphothreonine. Phosphoserine is present on residues Ser353 and Ser383.

This sequence belongs to the protein kinase superfamily. CAMK Ser/Thr protein kinase family. SNF1 subfamily. As to quaternary structure, AMPK is a heterotrimer of an alpha catalytic subunit (PRKAA1 or PRKAA2), a beta (PRKAB1 or PRKAB2) and a gamma non-catalytic subunits (PRKAG1, PRKAG2 or PRKAG3). Interacts with FNIP1 and FNIP2. Requires Mg(2+) as cofactor. Post-translationally, ubiquitinated. In terms of processing, phosphorylated at Thr-133 by STK11/LKB1 in complex with STE20-related adapter-alpha (STRADA) pseudo kinase and CAB39. Also phosphorylated at Thr-133 by CAMKK2; triggered by a rise in intracellular calcium ions, without detectable changes in the AMP/ATP ratio. CAMKK1 can also phosphorylate Thr-133, but at a much lower level. Dephosphorylated by protein phosphatase 2A and 2C (PP2A and PP2C). Phosphorylated by ULK1 and ULK2; leading to negatively regulate AMPK activity and suggesting the existence of a regulatory feedback loop between ULK1, ULK2 and AMPK. Dephosphorylated by PPM1A and PPM1B. Glycosylated; O-GlcNAcylated by OGT, promoting the AMP-activated protein kinase (AMPK) activity.

The protein resides in the cytoplasm. It is found in the nucleus. The catalysed reaction is L-seryl-[protein] + ATP = O-phospho-L-seryl-[protein] + ADP + H(+). It carries out the reaction L-threonyl-[protein] + ATP = O-phospho-L-threonyl-[protein] + ADP + H(+). It catalyses the reaction L-seryl-[acetyl-CoA carboxylase] + ATP = O-phospho-L-seryl-[acetyl-CoA carboxylase] + ADP + H(+). The enzyme catalyses L-seryl-[3-hydroxy-3-methylglutaryl-coenzyme A reductase] + ATP = O-phospho-L-seryl-[3-hydroxy-3-methylglutaryl-coenzyme A reductase] + ADP + H(+). The catalysed reaction is L-seryl-[tau protein] + ATP = O-phospho-L-seryl-[tau protein] + ADP + H(+). It carries out the reaction L-threonyl-[tau protein] + ATP = O-phospho-L-threonyl-[tau protein] + ADP + H(+). Its activity is regulated as follows. Activated by phosphorylation on Thr-133. Binding of AMP to non-catalytic gamma subunit (PRKAG1, PRKAG2 or PRKAG3) results in allosteric activation, inducing phosphorylation on Thr-133. AMP-binding to gamma subunit also sustains activity by preventing dephosphorylation of Thr-133. ADP also stimulates Thr-133 phosphorylation, without stimulating already phosphorylated AMPK. ATP promotes dephosphorylation of Thr-133, rendering the enzyme inactive. Under physiological conditions AMPK mainly exists in its inactive form in complex with ATP, which is much more abundant than AMP. Selectively inhibited by compound C (6-[4-(2-Piperidin-1-yl-ethoxy)-phenyl)]-3-pyridin-4-yl-pyyrazolo[1,5-a] pyrimidine. Activated by resveratrol, a natural polyphenol present in red wine, and S17834, a synthetic polyphenol. In terms of biological role, catalytic subunit of AMP-activated protein kinase (AMPK), an energy sensor protein kinase that plays a key role in regulating cellular energy metabolism. In response to reduction of intracellular ATP levels, AMPK activates energy-producing pathways and inhibits energy-consuming processes: inhibits protein, carbohydrate and lipid biosynthesis, as well as cell growth and proliferation. AMPK acts via direct phosphorylation of metabolic enzymes, and by longer-term effects via phosphorylation of transcription regulators. Regulates lipid synthesis by phosphorylating and inactivating lipid metabolic enzymes such as ACACA, ACACB, GYS1, HMGCR and LIPE; regulates fatty acid and cholesterol synthesis by phosphorylating acetyl-CoA carboxylase (ACACA and ACACB) and hormone-sensitive lipase (LIPE) enzymes, respectively. Promotes lipolysis of lipid droplets by mediating phosphorylation of isoform 1 of CHKA (CHKalpha2). Regulates insulin-signaling and glycolysis by phosphorylating IRS1, PFKFB2 and PFKFB3. AMPK stimulates glucose uptake in muscle by increasing the translocation of the glucose transporter SLC2A4/GLUT4 to the plasma membrane, possibly by mediating phosphorylation of TBC1D4/AS160. Regulates transcription and chromatin structure by phosphorylating transcription regulators involved in energy metabolism such as CRTC2/TORC2, FOXO3, histone H2B, HDAC5, MEF2C, MLXIPL/ChREBP, EP300, HNF4A, p53/TP53, SREBF1, SREBF2 and PPARGC1A. Acts as a key regulator of glucose homeostasis in liver by phosphorylating CRTC2/TORC2, leading to CRTC2/TORC2 sequestration in the cytoplasm. In response to stress, phosphorylates 'Ser-36' of histone H2B (H2BS36ph), leading to promote transcription. Acts as a key regulator of cell growth and proliferation by phosphorylating FNIP1, TSC2, RPTOR, WDR24 and ATG1/ULK1: in response to nutrient limitation, negatively regulates the mTORC1 complex by phosphorylating RPTOR component of the mTORC1 complex and by phosphorylating and activating TSC2. Also phosphorylates and inhibits GATOR2 subunit WDR24 in response to nutrient limitation, leading to suppress glucose-mediated mTORC1 activation. In response to energetic stress, phosphorylates FNIP1, inactivating the non-canonical mTORC1 signaling, thereby promoting nuclear translocation of TFEB and TFE3, and inducing transcription of lysosomal or autophagy genes. In response to nutrient limitation, promotes autophagy by phosphorylating and activating ATG1/ULK1. In that process also activates WDR45/WIPI4. Phosphorylates CASP6, thereby preventing its autoprocessing and subsequent activation. In response to nutrient limitation, phosphorylates transcription factor FOXO3 promoting FOXO3 mitochondrial import. Also acts as a regulator of cellular polarity by remodeling the actin cytoskeleton; probably by indirectly activating myosin. AMPK also acts as a regulator of circadian rhythm by mediating phosphorylation of CRY1, leading to destabilize it. May regulate the Wnt signaling pathway by phosphorylating CTNNB1, leading to stabilize it. Also has tau-protein kinase activity: in response to amyloid beta A4 protein (APP) exposure, activated by CAMKK2, leading to phosphorylation of MAPT/TAU; however the relevance of such data remains unclear in vivo. Also phosphorylates CFTR, EEF2K, KLC1, NOS3 and SLC12A1. Regulates hepatic lipogenesis. Activated via SIRT3, represses sterol regulatory element-binding protein (SREBP) transcriptional activities and ATP-consuming lipogenesis to restore cellular energy balance. Upon stress, regulates mitochondrial fragmentation through phosphorylation of MTFR1L. This Sus scrofa (Pig) protein is 5'-AMP-activated protein kinase catalytic subunit alpha-1 (PRKAA1).